A 251-amino-acid polypeptide reads, in one-letter code: uncharacterized protein (251 aa).

Asn149, Asn152, and Asn207 each carry an N-linked (GlcNAc...) asparagine; by host glycan. Residues 226–246 (YLIFIIIIIIFIILILLWIKY) form a helical membrane-spanning segment.

This sequence belongs to the glycosyltransferase 32 family.

It is found in the membrane. This is an uncharacterized protein from Acanthamoeba polyphaga (Amoeba).